The following is a 188-amino-acid chain: Meiotically up-regulated gene 94 protein (188 aa).

It localises to the cytoplasm. It is found in the nucleus. Its function is as follows. Has a role in meiosis. The polypeptide is Meiotically up-regulated gene 94 protein (mug94) (Schizosaccharomyces pombe (strain 972 / ATCC 24843) (Fission yeast)).